Consider the following 200-residue polypeptide: Inner membrane-spanning protein YciB (200 aa).

A run of 6 helical transmembrane segments spans residues 7–27 (HPLF…VVNA), 32–52 (FAAT…SYVV), 56–76 (VPLM…LTLV), 93–113 (LFAA…AIMF), 126–146 (ILTF…EIIW), and 153–173 (FWVG…AIAQ).

It belongs to the YciB family.

It localises to the cell inner membrane. Functionally, plays a role in cell envelope biogenesis, maintenance of cell envelope integrity and membrane homeostasis. In Bradyrhizobium sp. (strain BTAi1 / ATCC BAA-1182), this protein is Inner membrane-spanning protein YciB.